Reading from the N-terminus, the 1804-residue chain is Collagen alpha-1(XI) chain (1804 aa).

Residues 1 to 34 (MEPWSRWKTKRWIWDLTISTLVLTFLFQAREVRG) form the signal peptide. A propeptide spans 35–511 (AAPVDILKAL…SKGPTISAQE (477 aa)) (N-terminal propeptide). Cystine bridges form between cysteine 60–cysteine 242 and cysteine 181–cysteine 235. A Laminin G-like domain is found at 70-242 (DIAYRVTEEA…DYCDHYSPDC (173 aa)). The tract at residues 229–417 (KAAYDYCDHY…DFTETSINGH (189 aa)) is nonhelical region. A glycan (N-linked (GlcNAc...) asparagine) is linked at asparagine 351. The tract at residues 418-506 (GAYGEKGQKG…YGGDGSKGPT (89 aa)) is triple-helical region (interrupted). Residues 437-506 (LVEGPPGPAG…YGGDGSKGPT (70 aa)) form a disordered region. The Collagen-like 1 domain occupies 440–488 (GPPGPAGPAGLMGPPGLQGPSGLPGDPGDRGPPGRPGLPGADGLPGPPG). Composition is skewed to low complexity over residues 447-465 (PAGLMGPPGLQGPSGLPGD) and 477-494 (LPGADGLPGPPGTMLMLP). Residues 507 to 509 (ISA) form a short nonhelical segment region. Positions 510 to 527 (QEAQAQAILQQARIALRG) are telopeptide. Positions 526–1560 (RGPPGPMGLT…KTRRHTESIQ (1035 aa)) are disordered. Residues 528-1540 (PPGPMGLTGR…PGPPGPPGEV (1013 aa)) are triple-helical region. Collagen-like domains are found at residues 530-584 (GPMG…GADG), 581-639 (GADG…EIGP), 607-664 (PGDK…PGQP), and 641-698 (GLPG…GPQG). 2 stretches are compositionally biased toward gly residues: residues 539-548 (GPVGGPGSAG) and 581-590 (GADGGRGMPG). Position 610 is an allysine (lysine 610). Over residues 639–655 (PRGLPGEAGPRGLLGPR) the composition is skewed to low complexity. Pro residues predominate over residues 697–708 (QGLPGPQGPIGP). Residues 715–726 (QGKPGLAGLPGA) show a composition bias toward low complexity. The Collagen-like 6 domain occupies 746–804 (GPPGPQGPIGYPGPRGVKGADGVRGLKGSKGEKGEDGFPGFKGDMGLKGDRGEVGQVGP). Residues 805-814 (RGEDGPEGPK) show a composition bias toward basic and acidic residues. 3 stretches are compositionally biased toward low complexity: residues 873-901 (KPGPRGQRGPTGPRGSRGARGPTGKPGPK), 916-925 (RGPQGPQGPV), and 969-979 (PQGPTGETGPI). Gly residues predominate over residues 1040–1049 (GLKGGEGPQG). Over residues 1074–1083 (RPGPQGPPGP) the composition is skewed to pro residues. Positions 1084–1108 (AGEKGAPGEKGPQGPAGRDGVQGPV) are enriched in low complexity. Residues 1160 to 1169 (GIAGGDGEAG) show a composition bias toward gly residues. Pro residues-rich tracts occupy residues 1216–1227 (MGPPGPPGPRGP) and 1341–1360 (QPGPPGPSGEAGPPGPPGKR). 2 stretches are compositionally biased toward low complexity: residues 1383–1392 (AEGPPGKTGP) and 1417–1426 (QGLPGAAGQD). Collagen-like domains follow at residues 1391-1449 (GPVG…SKGE), 1442-1492 (GDPG…PGPA), and 1481-1539 (GAKG…PPGE). Pro residues predominate over residues 1428-1437 (PPGPLGPPGL). Lysine 1450 is subject to Allysine. Low complexity predominate over residues 1453–1462 (PGLIGLIGPP). Residues 1481–1490 (GAKGDGGIPG) are compositionally biased toward gly residues. Residues 1491–1507 (PAGPIGPPGPPGLPGPA) show a composition bias toward pro residues. Positions 1509 to 1519 (PKGNKGSSGPT) are enriched in low complexity. Over residues 1528–1537 (PGPPGPPGPP) the composition is skewed to pro residues. The segment at 1541–1561 (IQPLPILSPKKTRRHTESIQA) is nonhelical region (C-terminal). Positions 1562 to 1804 (DAGDNILDYS…FEVGPACFLG (243 aa)) are cleaved as a propeptide — C-terminal propeptide. The Fibrillar collagen NC1 domain occupies 1575–1803 (EEIFGSLNSL…GFEVGPACFL (229 aa)). A disulfide bridge links cysteine 1605 with cysteine 1637. Ca(2+) contacts are provided by aspartate 1623, asparagine 1625, glutamine 1626, cysteine 1628, and aspartate 1631. Residues asparagine 1638 and asparagine 1707 are each glycosylated (N-linked (GlcNAc...) asparagine). 2 disulfide bridges follow: cysteine 1646/cysteine 1801 and cysteine 1712/cysteine 1755.

The protein belongs to the fibrillar collagen family. In terms of assembly, trimers composed of three different chains: alpha 1(XI), alpha 2(XI), and alpha 3(XI). Alpha 3(XI) is probably a post-translational modification of alpha 1(II). Prolines at the third position of the tripeptide repeating unit (G-X-Y) are hydroxylated in some or all of the chains. In terms of processing, N-glycosylated.

Its subcellular location is the secreted. The protein resides in the extracellular space. The protein localises to the extracellular matrix. May play an important role in fibrillogenesis by controlling lateral growth of collagen II fibrils. The polypeptide is Collagen alpha-1(XI) chain (Col11a1) (Rattus norvegicus (Rat)).